The chain runs to 209 residues: Large ribosomal subunit protein bL25 (209 aa).

The segment at 190–209 (LKSEEAASEGAAEEEAKDGE) is disordered. Positions 200–209 (AAEEEAKDGE) are enriched in acidic residues.

This sequence belongs to the bacterial ribosomal protein bL25 family. CTC subfamily. Part of the 50S ribosomal subunit; part of the 5S rRNA/L5/L18/L25 subcomplex. Contacts the 5S rRNA. Binds to the 5S rRNA independently of L5 and L18.

In terms of biological role, this is one of the proteins that binds to the 5S RNA in the ribosome where it forms part of the central protuberance. The sequence is that of Large ribosomal subunit protein bL25 from Brucella anthropi (strain ATCC 49188 / DSM 6882 / CCUG 24695 / JCM 21032 / LMG 3331 / NBRC 15819 / NCTC 12168 / Alc 37) (Ochrobactrum anthropi).